We begin with the raw amino-acid sequence, 456 residues long: Yersinopine synthase (456 aa).

Residues 12-15 (AGPA), 35-40 (NRPSTK), and T154 contribute to the NADP(+) site. H242 acts as the Proton donor/acceptor in catalysis.

This sequence belongs to the staphylopine dehydrogenase family. Homodimer.

It catalyses the reaction yersinopine + NADP(+) + H2O = (2S)-2-amino-4-{[(1S)-1-carboxy-2-(1H-imidazol-4-yl)ethyl]amino}butanoate + pyruvate + NADPH + H(+). Functionally, catalyzes the NADPH-dependent reductive condensation of pyruvate to the intermediate formed by the adjacently encoded enzyme y2836, namely (2S)-2-amino-4-{[(1S)-1-carboxy-2-(1H-imidazol-4-yl)ethyl]amino}butanoate, leading to the production of yersinopine. This is the last step in the biosynthesis of the metallophore yersinopine, which is involved in metal acquisition and thus enables bacterial growth inside the host, where metal access is limited. Therefore, this enzyme probably contributes to Yersinia virulence. Cannot use alpha-ketoglutarate in place of pyruvate, and displays only poor efficiency with oxaloacetate and glyoxylate. This chain is Yersinopine synthase, found in Yersinia pestis.